Reading from the N-terminus, the 44-residue chain is Defensin ARD1 (44 aa).

3 cysteine pairs are disulfide-bonded: C7–C32, C18–C40, and C22–C42.

The protein resides in the secreted. In terms of biological role, possesses potent anti-fungal activity. The sequence is that of Defensin ARD1 from Archaeoprepona demophon (One-spotted leafwing butterfly).